Reading from the N-terminus, the 322-residue chain is uncharacterized protein (322 aa).

Composition is skewed to basic residues over residues 1-16 (MPGN…KSGT) and 43-61 (LRPH…RRPV). A disordered region spans residues 1–69 (MPGNSRRRGA…PVKRADETET (69 aa)). Positions 261, 281, and 290 each coordinate S-adenosyl-L-methionine.

The protein belongs to the class IV-like SAM-binding methyltransferase superfamily. RNA methyltransferase TrmH family.

This is an uncharacterized protein from Mycobacterium bovis (strain ATCC BAA-935 / AF2122/97).